Reading from the N-terminus, the 3473-residue chain is AP2/ERF domain-containing protein PFD0985w (3473 aa).

Disordered regions lie at residues 35–61 (NNII…NNNN), 366–450 (KMER…HLVC), 647–704 (NNNN…INAK), 750–801 (NIIK…RKKK), 1096–1196 (VDNN…MNMN), 1300–1328 (DNTS…NSRG), 1388–1418 (HLRS…GAER), 1773–1807 (NNTG…NNKV), and 1864–1898 (IGED…NNLS). Low complexity-rich tracts occupy residues 44–61 (NGHN…NNNN), 396–442 (NNND…NSNN), and 647–666 (NNNN…NNNN). Over residues 683–694 (TGDKHETSKKED) the composition is skewed to basic and acidic residues. Residues 751-768 (IIKSDNVNNNNNNNNNNN) are compositionally biased toward low complexity. The span at 785–801 (NKKHKKKNIHDNNRKKK) shows a compositional bias: basic residues. A compositionally biased stretch (low complexity) spans 1098-1156 (NNNNNNNNNNNNNVNNISNNGTNLEENANNANNANNPNNANNPNNANNSNNADYVNDYN). Residues 1160–1171 (KEEDDDDEEEDN) are compositionally biased toward acidic residues. Low complexity predominate over residues 1182–1196 (TNYNININGENMNMN). Polar residues-rich tracts occupy residues 1314–1326 (VGSN…NNNS) and 1390–1412 (RSSN…SSMR). Residues 1773–1805 (NNTGTTQNNNKYGTNSNNNNNNNNNNNNNNNNN) are compositionally biased toward low complexity. Over residues 1881-1893 (LKRRKNGNSKRAK) the composition is skewed to basic residues. The AP2/ERF 1 DNA-binding region spans 1957–2011 (PLPTGVYFDSARKLWRCQWKENGKFKTKGFSLIHYSTLEEARKQCILYRCDVGNI). 8 disordered regions span residues 2068-2088 (EKTG…NVNN), 2319-2343 (QVDV…SNSK), 2387-2470 (TNDN…NIRS), 2520-2584 (LGNG…NYNN), 2609-2677 (LYGK…PASN), 2840-2860 (MNNN…NNVK), 2881-2902 (NDKL…SSSP), and 2937-2960 (KYVE…KKDE). Residues 2333–2342 (KRSKRSKSNS) are compositionally biased toward basic residues. Composition is skewed to low complexity over residues 2388-2400 (NDNN…NNND) and 2409-2460 (DNNN…NNND). Residues 2525 to 2542 (DGEEEGGGDYDEKEDDLL) are compositionally biased toward acidic residues. Low complexity-rich tracts occupy residues 2557–2584 (NNNN…NYNN) and 2615–2624 (NNNNNNNNNN). Over residues 2663–2675 (LLNSQVNESSAPA) the composition is skewed to polar residues. Residues 2841 to 2858 (NNNNNNNNNNNNNNNNNN) show a composition bias toward low complexity. The segment covering 2943-2953 (NGDKETNDYNT) has biased composition (basic and acidic residues). Residues 3268–3321 (SLPKGIYYDHAKKLYRVQYIINNSIKTKGFSVKKLGLAQAKIEAESFRNFCLEN) constitute a DNA-binding region (AP2/ERF 2). Residues 3369–3391 (KMSINNDGNNNDGNNNDGNNNDD) are compositionally biased toward low complexity. The segment at 3369 to 3473 (KMSINNDGNN…NNDNEMSQNE (105 aa)) is disordered. A compositionally biased stretch (acidic residues) spans 3392–3403 (NNNDDNNNDDNN). Residues 3404–3457 (NDGNNNDDNNNEGINNDDNNNEGINNDDNNNEGINNNDDNNNNDDNNNEGINND) show a composition bias toward low complexity.

The protein localises to the nucleus. In Plasmodium falciparum (isolate 3D7), this protein is AP2/ERF domain-containing protein PFD0985w.